Reading from the N-terminus, the 362-residue chain is Sulfate/thiosulfate import ATP-binding protein CysA (362 aa).

The ABC transporter domain maps to I3–L237. Residue G35–T42 coordinates ATP.

The protein belongs to the ABC transporter superfamily. Sulfate/tungstate importer (TC 3.A.1.6) family. The complex is composed of two ATP-binding proteins (CysA), two transmembrane proteins (CysT and CysW) and a solute-binding protein (CysP).

The protein resides in the cell inner membrane. It catalyses the reaction sulfate(out) + ATP + H2O = sulfate(in) + ADP + phosphate + H(+). It carries out the reaction thiosulfate(out) + ATP + H2O = thiosulfate(in) + ADP + phosphate + H(+). Functionally, part of the ABC transporter complex CysAWTP involved in sulfate/thiosulfate import. Responsible for energy coupling to the transport system. This chain is Sulfate/thiosulfate import ATP-binding protein CysA, found in Photorhabdus laumondii subsp. laumondii (strain DSM 15139 / CIP 105565 / TT01) (Photorhabdus luminescens subsp. laumondii).